The following is a 375-amino-acid chain: N-acetyldiaminopimelate deacetylase (375 aa).

The active site involves aspartate 69. Catalysis depends on glutamate 128, which acts as the Proton acceptor.

This sequence belongs to the peptidase M20A family. N-acetyldiaminopimelate deacetylase subfamily.

The catalysed reaction is N-acetyl-(2S,6S)-2,6-diaminopimelate + H2O = (2S,6S)-2,6-diaminopimelate + acetate. It functions in the pathway amino-acid biosynthesis; L-lysine biosynthesis via DAP pathway; LL-2,6-diaminopimelate from (S)-tetrahydrodipicolinate (acetylase route): step 3/3. Its function is as follows. Catalyzes the conversion of N-acetyl-diaminopimelate to diaminopimelate and acetate. The polypeptide is N-acetyldiaminopimelate deacetylase (Streptococcus suis (strain 05ZYH33)).